Consider the following 147-residue polypeptide: Protein YjdN (147 aa).

This is Protein YjdN (yjdN) from Escherichia coli (strain K12).